A 409-amino-acid chain; its full sequence is Broad specificity amino-acid racemase (409 aa).

An N-terminal signal peptide occupies residues 1–25; the sequence is MRLKKTLLSIAIAAATFTPAMHSIA. Cys-72 and Cys-98 are oxidised to a cystine. The active-site Proton acceptor is Lys-76. Lys-76 carries the post-translational modification N6-(pyridoxal phosphate)lysine. Arg-175 serves as a coordination point for substrate. The active-site Proton acceptor is Tyr-301. Met-349 contacts substrate.

This sequence belongs to the alanine racemase family. Bsr subfamily. It depends on pyridoxal 5'-phosphate as a cofactor.

Its subcellular location is the periplasm. It carries out the reaction an L-alpha-amino acid = a D-alpha-amino acid. The catalysed reaction is L-lysine = D-lysine. The enzyme catalyses L-arginine = D-arginine. Functionally, amino-acid racemase able to utilize a broad range of substrates. The protein is Broad specificity amino-acid racemase of Vibrio parahaemolyticus serotype O3:K6 (strain RIMD 2210633).